Consider the following 784-residue polypeptide: MPHTLWMVWVLGVIISLSKEESSNQASLSCDRNGICKGSSGSLNSIPSGLTEAVKSLDLSNNRITYISNSDLQRCVNLQALVLTSNGINTIEEDSFSSLGSLEHLDLSYNYLSNLSSSWFKPLSSLTFLNLLGNPYKTLGETSLFSHLTKLQILRVGNMDTFTKIQRKDFAGLTFLEELEIDASDLQSYEPKSLKSIQNVSHLILHMKQHILLLEIFVDVTSSVECLELRDTDLDTFRFSELSTGETNSLIKKFTFRNVKITDESLFQVMKLLNQISGLLELEFDDCTLNGVGNFRASDNDRVIDPGKVETLTIRRLHIPRFYLFYDLSTLYSLTERVKRITVENSKVFLVPCLLSQHLKSLEYLDLSENLIVEEYLKNSACEDAWPSLQTLILRQNHLASLEKTGETLLTLKNLTNVDISKNSFHSMPETCQWPEKMKYLNLSSTRIHSVTGCIPKTLEILDVSNNNLNLFSLNLPQLKELYISRNKLMTLPDASLLPMLLVLKISRNAITTFSKEQLDSFHTLKTLEAGGNNFICSCEFLSFTQEQQALAKVLIDWPANYLCDSPSHVRGQQVQDVRLSVSECHRTALVSGMCCALFLLILLTGVLCHRFHGLWYMKMMWAWLQAKRKPRKAPSRNICYDAFVSYSERDAYWVENLMVQELENFNPPFKLCLHKRDFIPGKWIIDNIIDSIEKSHKTVFVLSENFVKSEWCKYELDFSHFRLFDENNDAAILILLEPIEKKAIPQRFCKLRKIMNTKTYLEWPMDEAQREGFWVNLRAAIKS.

Positions 1-20 (MPHTLWMVWVLGVIISLSKE) are cleaved as a signal peptide. At 21 to 587 (ESSNQASLSC…VRLSVSECHR (567 aa)) the chain is on the extracellular side. C30 and C36 form a disulfide bridge. LRR repeat units lie at residues 54 to 77 (VKSLDLSNNRITYISNSDLQRCVN), 78 to 101 (LQALVLTSNGINTIEEDSFSSLGS), 102 to 125 (LEHLDLSYNYLSNLSSSWFKPLSS), 126 to 150 (LTFLNLLGNPYKTLGETSLFSHLTK), 151 to 175 (LQILRVGNMDTFTKIQRKDFAGLTF), 176 to 199 (LEELEIDASDLQSYEPKSLKSIQN), 200 to 223 (VSHLILHMKQHILLLEIFVDVTSS), 224 to 250 (VECLELRDTDLDTFRFSELSTGETNSL), 251 to 278 (IKKFTFRNVKITDESLFQVMKLLNQISG), 279 to 308 (LLELEFDDCTLNGVGNFRASDNDRVIDPGK), 309 to 337 (VETLTIRRLHIPRFYLFYDLSTLYSLTER), 338 to 361 (VKRITVENSKVFLVPCLLSQHLKS), 362 to 388 (LEYLDLSENLIVEEYLKNSACEDAWPS), 389 to 414 (LQTLILRQNHLASLEKTGETLLTLKN), 415 to 437 (LTNVDISKNSFHSMPETCQWPEK), 438 to 457 (MKYLNLSSTRIHSVTGCIPK), 458 to 478 (TLEILDVSNNNLNLFSLNLPQ), 479 to 500 (LKELYISRNKLMTLPDASLLPM), and 501 to 524 (LLVLKISRNAITTFSKEQLDSFHT). A glycan (N-linked (GlcNAc...) asparagine) is linked at N114. N199 carries an N-linked (GlcNAc...) asparagine glycan. C353 and C382 are joined by a disulfide. N414 is a glycosylation site (N-linked (GlcNAc...) asparagine). A disulfide bond links C432 and C454. An N-linked (GlcNAc...) asparagine glycan is attached at N442. Positions 525–579 (LKTLEAGGNNFICSCEFLSFTQEQQALAKVLIDWPANYLCDSPSHVRGQQVQDVR) constitute an LRRCT domain. A helical transmembrane segment spans residues 588-608 (TALVSGMCCALFLLILLTGVL). Residues 609-784 (CHRFHGLWYM…WVNLRAAIKS (176 aa)) lie on the Cytoplasmic side of the membrane. One can recognise a TIR domain in the interval 639 to 782 (ICYDAFVSYS…GFWVNLRAAI (144 aa)). K754 participates in a covalent cross-link: Glycyl lysine isopeptide (Lys-Gly) (interchain with G-Cter in ubiquitin). The ATG16L1-binding motif signature appears at 761 to 778 (YLEWPMDEAQREGFWVNL).

It belongs to the Toll-like receptor family. As to quaternary structure, interacts with LY96, TLR1 and TLR6 (via extracellular domain). TLR2 seems to exist in heterodimers with either TLR1 or TLR6 before stimulation by the ligand. The heterodimers form bigger oligomers in response to their corresponding ligands as well as further heterotypic associations with other receptors such as CD14 and/or CD36. Binds MYD88 (via TIR domain). Interacts with TICAM1. Interacts with CNPY3. Interacts with ATG16L1. Interacts with PPP1R11. Interacts with TICAM2. Interacts with TIRAP. Post-translationally, ubiquitinated at Lys-754 by PPP1R11, leading to its degradation. Deubiquitinated by USP2. Glycosylation of Asn-442 is critical for secretion of the N-terminal ectodomain of TLR2.

The protein resides in the membrane. It is found in the cytoplasmic vesicle. Its subcellular location is the phagosome membrane. The protein localises to the membrane raft. Functionally, cooperates with LY96 to mediate the innate immune response to bacterial lipoproteins and other microbial cell wall components. Cooperates with TLR1 or TLR6 to mediate the innate immune response to bacterial lipoproteins or lipopeptides. Acts via MYD88 and TRAF6, leading to NF-kappa-B activation, cytokine secretion and the inflammatory response. May also promote apoptosis in response to lipoproteins. Forms activation clusters composed of several receptors depending on the ligand, these clusters trigger signaling from the cell surface and subsequently are targeted to the Golgi in a lipid-raft dependent pathway. Forms the cluster TLR2:TLR6:CD14:CD36 in response to diacylated lipopeptides and TLR2:TLR1:CD14 in response to triacylated lipopeptides. The chain is Toll-like receptor 2 (TLR2) from Pan troglodytes (Chimpanzee).